The sequence spans 122 residues: NADH-quinone oxidoreductase subunit A (122 aa).

Transmembrane regions (helical) follow at residues 10-30 (MIVL…LTLG), 66-86 (IFAL…PWAV), and 91-111 (LGLF…VGLA).

The protein belongs to the complex I subunit 3 family. NDH-1 is composed of 14 different subunits. Subunits NuoA, H, J, K, L, M, N constitute the membrane sector of the complex.

It is found in the cell membrane. It carries out the reaction a quinone + NADH + 5 H(+)(in) = a quinol + NAD(+) + 4 H(+)(out). Its function is as follows. NDH-1 shuttles electrons from NADH, via FMN and iron-sulfur (Fe-S) centers, to quinones in the respiratory chain. The immediate electron acceptor for the enzyme in this species is believed to be a menaquinone. Couples the redox reaction to proton translocation (for every two electrons transferred, four hydrogen ions are translocated across the cytoplasmic membrane), and thus conserves the redox energy in a proton gradient. The protein is NADH-quinone oxidoreductase subunit A of Bacillus cereus (strain ATCC 14579 / DSM 31 / CCUG 7414 / JCM 2152 / NBRC 15305 / NCIMB 9373 / NCTC 2599 / NRRL B-3711).